We begin with the raw amino-acid sequence, 38 residues long: DNA binding protein VP8 (38 aa).

The span at 1–16 shows a compositional bias: basic residues; the sequence is MKRKPMSRKASQKTFK. A disordered region spans residues 1–38; sequence MKRKPMSRKASQKTFKKNTGVQRMNHLNPRAMRGGIRL.

This sequence belongs to the microviridae J protein family.

The protein localises to the virion. Its subcellular location is the host cytoplasm. Functionally, mediates ssDNA packaging into virion, it locates to the internal surface of the capsid, thereby displacing the internal scaffolding protein VP3 during virion formation. Additionally, protein VP8 plays a role in viral attachment to the host cell. This Bdellovibrio phage phiMH2K (Bacteriophage phiMH2K) protein is DNA binding protein VP8.